The chain runs to 128 residues: Holin-like protein CidA (128 aa).

The next 3 helical transmembrane spans lie at 23 to 43 (LIVE…IVIF), 58 to 78 (IGAL…AVGI), and 84 to 104 (ILAE…FVVM).

The protein belongs to the CidA/LrgA family. CidA subfamily.

The protein localises to the cell membrane. In terms of biological role, increases the activity of extracellular murein hydrolases possibly by mediating their export via hole formation. Inhibited by the antiholin-like proteins LrgAB. In an unstressed cell, the LrgAB products probably inhibit the function of the CidA protein. When a cell is stressed by the addition of antibiotics or by other factors in the environment, CidA possibly oligomerizes within the bacterial cell membrane, creating lesions that disrupt the proton motive force, which in turn results in loss of cell viability. These lesions are also hypothesized to regulate the subsequent cell lysis by either allowing the murein hydrolases access to the cell wall substrate and/or regulating their activity by a possible change in the cell wall pH that results from loss of membrane potential. This is Holin-like protein CidA from Bacillus licheniformis (strain ATCC 14580 / DSM 13 / JCM 2505 / CCUG 7422 / NBRC 12200 / NCIMB 9375 / NCTC 10341 / NRRL NRS-1264 / Gibson 46).